Reading from the N-terminus, the 102-residue chain is Large ribosomal subunit protein bL21 (102 aa).

The protein belongs to the bacterial ribosomal protein bL21 family. Part of the 50S ribosomal subunit. Contacts protein L20.

Functionally, this protein binds to 23S rRNA in the presence of protein L20. The sequence is that of Large ribosomal subunit protein bL21 from Exiguobacterium sibiricum (strain DSM 17290 / CCUG 55495 / CIP 109462 / JCM 13490 / 255-15).